The primary structure comprises 299 residues: UTP--glucose-1-phosphate uridylyltransferase 1 (299 aa).

This sequence belongs to the UDPGP type 2 family.

The catalysed reaction is alpha-D-glucose 1-phosphate + UTP + H(+) = UDP-alpha-D-glucose + diphosphate. The protein operates within carbohydrate metabolism; nucleotide-sugar metabolism. The polypeptide is UTP--glucose-1-phosphate uridylyltransferase 1 (hasC1) (Streptococcus pyogenes serotype M6 (strain ATCC BAA-946 / MGAS10394)).